The sequence spans 255 residues: Sorbose reductase sou1 (255 aa).

Positions 21 and 95 each coordinate NADP(+). Residues Ser-148 and Tyr-163 each act as proton donor in the active site. NADP(+) contacts are provided by Tyr-163, Lys-167, Ile-195, and Thr-197. Residue Lys-167 is the Lowers pKa of active site Tyr of the active site.

The protein belongs to the short-chain dehydrogenases/reductases (SDR) family.

The catalysed reaction is D-sorbitol + NADP(+) = keto-L-sorbose + NADPH + H(+). In terms of biological role, catalyzes the NADP dependent reduction of L-sorbose to D-glucitol. This Schizosaccharomyces pombe (strain 972 / ATCC 24843) (Fission yeast) protein is Sorbose reductase sou1 (sou1).